The following is a 382-amino-acid chain: GDP-mannose transporter 1 (382 aa).

At 1 to 40 the chain is on the cytoplasmic side; sequence MADDKKTNEYTVEMDKLDHGNKNFEAPAPAVRPRGPPAAQ. Residues 41 to 61 form a helical membrane-spanning segment; sequence LANNPILPVLAYCGSSILMTV. Residues 62 to 71 lie on the Lumenal side of the membrane; it reads MNKYVLSGTD. The chain crosses the membrane as a helical span at residues 72–92; the sequence is FNLNFFLLCVQSIVCIVAIQT. Residues 93–110 lie on the Cytoplasmic side of the membrane; the sequence is CKSSKLITYRDFNSDEAK. The helical transmembrane segment at 111 to 127 threads the bilayer; that stretch reads KWFPITLLLIGMIYTGS. The Lumenal portion of the chain corresponds to 128–134; that stretch reads KALQYLS. A helical membrane pass occupies residues 135 to 151; it reads IPVYTIFKNLTIILIAY. Topologically, residues 152 to 160 are cytoplasmic; that stretch reads GEVLWFGGS. Residues 161-182 form a helical membrane-spanning segment; sequence VTGMTLFSFGLMVLSSIIAAWA. Topologically, residues 183-200 are lumenal; it reads DIKHAVESSGDATAKVST. A helical transmembrane segment spans residues 201 to 221; sequence LNAGYIWMLINCLCTSSYVLG. The Cytoplasmic segment spans residues 222–233; that stretch reads MRKRIKLTNFKD. The helical transmembrane segment at 234 to 254 threads the bilayer; that stretch reads FDTMFYNNLLSIPVLLVLTFL. Topologically, residues 255–274 are lumenal; the sequence is MEDWSSANIARNFPPADRNG. A helical membrane pass occupies residues 275–295; it reads ILFAMILSGLSSVFISYTSAW. At 296-303 the chain is on the cytoplasmic side; it reads CVRVTSST. Residues 304-324 form a helical membrane-spanning segment; that stretch reads TYSMVGALNKLPIALSGLIFF. The Lumenal portion of the chain corresponds to 325-327; it reads DAP. Residues 328–348 traverse the membrane as a helical segment; sequence VTFPSVSAIVVGFISGIVYAV. Topologically, residues 349 to 382 are cytoplasmic; it reads AKIKQSAKPKTGVLPMSNPPVSASSQSMRDSLRS. Positions 358 to 382 are disordered; that stretch reads KTGVLPMSNPPVSASSQSMRDSLRS. A compositionally biased stretch (polar residues) spans 367–382; it reads PPVSASSQSMRDSLRS.

Belongs to the TPT transporter family. SLC35D subfamily. In terms of assembly, homooligomer.

Its subcellular location is the golgi apparatus membrane. It localises to the cytoplasmic vesicle membrane. It is found in the endoplasmic reticulum membrane. Involved in the import of GDP-mannose from the cytoplasm into the Golgi lumen. This is GDP-mannose transporter 1 (gmt1) from Neosartorya fischeri (strain ATCC 1020 / DSM 3700 / CBS 544.65 / FGSC A1164 / JCM 1740 / NRRL 181 / WB 181) (Aspergillus fischerianus).